A 173-amino-acid chain; its full sequence is Lens fiber membrane intrinsic protein (173 aa).

Residues 1–3 (MYS) are Cytoplasmic-facing. The chain crosses the membrane as a helical span at residues 4–24 (FMGGGLFCAWVGTILLVVATA). The Extracellular portion of the chain corresponds to 25-66 (TDHWMQYRLSGSFAHQGLWRYCLGNKCFLQTESIAYWNATRA). 2 C-linked (Man) tryptophan glycosylation sites follow: tryptophan 43 and tryptophan 61. Residue asparagine 62 is glycosylated (N-linked (GlcNAc...) asparagine). A helical transmembrane segment spans residues 67-87 (FMILSALCATSGIIMGVLAFA). Residues 88-98 (QQSTFTRLSRP) lie on the Cytoplasmic side of the membrane. Residues 99–119 (FSAGIMFFASTLFVLLALAIY) traverse the membrane as a helical segment. Residues 120-140 (TGVTVSFLGRRFGDWRFSWSY) lie on the Extracellular side of the membrane. A helical transmembrane segment spans residues 141-161 (ILGWVALLMTFFAGIFYMCAY). Over 162-173 (RMHECRRLATPR) the chain is Cytoplasmic. Phosphothreonine is present on threonine 171.

Belongs to the PMP-22/EMP/MP20 family. Seems to be associated with itself or another lens membrane component via disulfide bonds.

The protein resides in the membrane. Its function is as follows. Present in the thicker 16-17 nm junctions of mammalian lens fiber cells, where it may contribute to cell junctional organization. Acts as a receptor for calmodulin. May play an important role in both lens development and cataractogenesis. This Mus musculus (Mouse) protein is Lens fiber membrane intrinsic protein (Lim2).